Consider the following 392-residue polypeptide: Succinate--CoA ligase [ADP-forming] subunit beta (392 aa).

Residues 9–248 (KDILKKFGVS…TNEEDPFEVE (240 aa)) form the ATP-grasp domain. ATP is bound by residues lysine 50, 57–59 (GRG), glutamate 103, methionine 106, and glutamate 111. 2 residues coordinate Mg(2+): asparagine 203 and aspartate 217. Substrate contacts are provided by residues asparagine 268 and 325–327 (GIV).

The protein belongs to the succinate/malate CoA ligase beta subunit family. As to quaternary structure, heterotetramer of two alpha and two beta subunits. It depends on Mg(2+) as a cofactor.

It carries out the reaction succinate + ATP + CoA = succinyl-CoA + ADP + phosphate. The catalysed reaction is GTP + succinate + CoA = succinyl-CoA + GDP + phosphate. It participates in carbohydrate metabolism; tricarboxylic acid cycle; succinate from succinyl-CoA (ligase route): step 1/1. In terms of biological role, succinyl-CoA synthetase functions in the citric acid cycle (TCA), coupling the hydrolysis of succinyl-CoA to the synthesis of either ATP or GTP and thus represents the only step of substrate-level phosphorylation in the TCA. The beta subunit provides nucleotide specificity of the enzyme and binds the substrate succinate, while the binding sites for coenzyme A and phosphate are found in the alpha subunit. The chain is Succinate--CoA ligase [ADP-forming] subunit beta from Chlorobium limicola (strain DSM 245 / NBRC 103803 / 6330).